A 613-amino-acid polypeptide reads, in one-letter code: RNA polymerase-associated protein RTF1 homolog (613 aa).

Disordered regions lie at residues 1–90 (MSSS…DKAR) and 121–247 (QQLA…KDKI). A compositionally biased stretch (basic residues) spans 55–68 (PAKKKTLTKRKRRA). Residues 72–81 (SDDDQVDDDL) are compositionally biased toward acidic residues. Basic and acidic residues predominate over residues 167-176 (AAFHRPSDIN). Residues 175–209 (INRKHKEKNAMDALKNKRKEIEKKNAKNEALSIDA) are a coiled coil. The segment covering 215–235 (SGSSSSSSSSESSRSSSSSRE) has biased composition (low complexity). Positions 236–247 (SSPERVSEKDKI) are enriched in basic and acidic residues. The region spanning 252–383 (VDGLSELRRA…KKQDIEKAIN (132 aa)) is the Plus3 domain. Residues 425–462 (RGDIREAEQIQTKIDEIERQADELEKERSKSISAIAFI) adopt a coiled-coil conformation. 2 disordered regions span residues 485-549 (SQDD…KTDI) and 564-613 (LKDF…SSAV). The segment covering 510–521 (TLSASSSTTNLS) has biased composition (low complexity). The span at 569-586 (TPESSGNKRPSISSSKGV) shows a compositional bias: polar residues. A compositionally biased stretch (low complexity) spans 602–613 (GSSTSAAPSSAV).

As to quaternary structure, component of the PAF1 complex which consists of at least cdc-73, ctr-9, leo-1, pafo-1 and rtfo-1.

The protein localises to the nucleus. In terms of biological role, component of the PAF1 complex which is a multifunctional complex involved in transcription initiation via genetic interactions with TATA-binding proteins, elongation and transcription-coupled histone modification. This is RNA polymerase-associated protein RTF1 homolog from Caenorhabditis elegans.